A 218-amino-acid chain; its full sequence is Sodium channel regulatory subunit beta-1 (218 aa).

An N-terminal signal peptide occupies residues M1–W18. Residues G19 to I157 lie on the Extracellular side of the membrane. Disulfide bonds link C21-C43 and C40-C121. The region spanning V22 to A150 is the Ig-like C2-type domain. N-linked (GlcNAc...) asparagine glycans are attached at residues N93, N110, N114, and N135. A helical membrane pass occupies residues V158 to V179. The Cytoplasmic segment spans residues Y180–E218.

It belongs to the sodium channel auxiliary subunit SCN1B (TC 8.A.17) family. In terms of assembly, a voltage-gated sodium (Nav) channel consists of an ion-conducting pore-forming alpha subunit functional on its own that is regulated by one or more beta subunits. Interacts with SCN1A; regulatory subunit of SCN1A/Nav1.1. Interacts with SCN3A; regulatory subunit of SCN3A/Nav1.3. Interacts with SCN4A; regulatory subunit of SCN4A/Nav1.4. Interacts with SCN5A; regulatory subunit of SCN5A/Nav1.5. Interacts with SCN8A; regulatory subunit of SCN8A/Nav1.6. Interacts with SCN9A; regulatory subunit of SCN9A/Nav1.7. Interacts with SCN10A; regulatory subunit of SCN10A/Nav1.8. Interacts with NFASC. Interacts with TMEM65. Detected in brain (at protein level). Expressed in brain, heart, skeletal muscle and spinal cord.

The protein resides in the cell membrane. The protein localises to the perikaryon. It localises to the cell projection. Its subcellular location is the axon. Its function is as follows. Regulatory subunit of multiple voltage-gated sodium (Nav) channels directly mediating the depolarization of excitable membranes. Navs, also called VGSCs (voltage-gated sodium channels) or VDSCs (voltage-dependent sodium channels), operate by switching between closed and open conformations depending on the voltage difference across the membrane. In the open conformation they allow Na(+) ions to selectively pass through the pore, along their electrochemical gradient. The influx of Na+ ions provokes membrane depolarization, initiating the propagation of electrical signals throughout cells and tissues. The accessory beta subunits participate in localization and functional modulation of the Nav channels. Modulates the activity of SCN1A/Nav1.1, SCN2A/Nav1.2, SCN3A/Nav1.3, SCN4A/Nav1.4, SCN5A/Nav1.5, SCN8A/Nav1.6, SCN9A/Nav1.7 and SCN10A/Nav1.8. The polypeptide is Sodium channel regulatory subunit beta-1 (Rattus norvegicus (Rat)).